We begin with the raw amino-acid sequence, 105 residues long: Fe-S protein maturation auxiliary factor PG_1777 (105 aa).

It belongs to the Fe-S cluster assembly domain superfamily. MIP18-like family. In terms of assembly, putative homodimer; may be disulfide-linked.

Functionally, iron binding protein that protects DNA from Fenton chemistry-mediated damage caused by hydrogen peroxide induced oxidative stress. May be involved in iron-sulfur cluster assembly. In Porphyromonas gingivalis (strain ATCC BAA-308 / W83), this protein is Fe-S protein maturation auxiliary factor PG_1777.